The following is a 111-amino-acid chain: Universal stress protein B (111 aa).

The helical transmembrane segment at 1–21 threads the bilayer; it reads MISTVSLFWALCVVCIVNMAR. The Cytoplasmic portion of the chain corresponds to 22–89; it reads YFSSLRALLV…IRRCERVRRQ (68 aa). The helical transmembrane segment at 90-110 threads the bilayer; that stretch reads FLLTSALCGLVVVSLIALMIW. Position 111 (H111) is a topological domain, periplasmic.

Belongs to the universal stress protein B family.

It is found in the cell inner membrane. The polypeptide is Universal stress protein B (uspB) (Salmonella choleraesuis (strain SC-B67)).